Reading from the N-terminus, the 236-residue chain is 2-C-methyl-D-erythritol 4-phosphate cytidylyltransferase (236 aa).

The protein belongs to the IspD/TarI cytidylyltransferase family. IspD subfamily.

It catalyses the reaction 2-C-methyl-D-erythritol 4-phosphate + CTP + H(+) = 4-CDP-2-C-methyl-D-erythritol + diphosphate. It participates in isoprenoid biosynthesis; isopentenyl diphosphate biosynthesis via DXP pathway; isopentenyl diphosphate from 1-deoxy-D-xylulose 5-phosphate: step 2/6. Catalyzes the formation of 4-diphosphocytidyl-2-C-methyl-D-erythritol from CTP and 2-C-methyl-D-erythritol 4-phosphate (MEP). This Burkholderia orbicola (strain AU 1054) protein is 2-C-methyl-D-erythritol 4-phosphate cytidylyltransferase.